The primary structure comprises 188 residues: Methylamine dehydrogenase light chain (188 aa).

The segment at residues 1 to 57 is a signal peptide (tat-type signal); sequence MLGNFRFDDMVEKLSRRVAGQTSRRSVIGKLGTAMLGIGLVPLLPVDRRGRVSRANA. 6 cysteine pairs are disulfide-bonded: Cys80–Cys145, Cys86–Cys118, Cys93–Cys178, Cys95–Cys143, Cys103–Cys134, and Cys135–Cys166. At Trp114 the chain carries Tryptophylquinone. A cross-link (tryptophan tryptophylquinone (Trp-Trp)) is located at residues 114-165; that stretch reads WVASCYNPTDGQSYLIAYRDCCGYNVSGRCPCLNTEGELPVYRPEFANDIIW.

The protein belongs to the aromatic amine dehydrogenase light chain family. As to quaternary structure, heterotetramer of two light and two heavy chains. Requires tryptophan tryptophylquinone residue as cofactor. In terms of processing, predicted to be exported by the Tat system. The position of the signal peptide cleavage has not been experimentally proven. Tryptophan tryptophylquinone (TTQ) is formed by oxidation of the indole ring of a tryptophan to form tryptophylquinone followed by covalent cross-linking with another tryptophan residue.

Its subcellular location is the periplasm. It catalyses the reaction 2 oxidized [amicyanin] + methylamine + H2O = 2 reduced [amicyanin] + formaldehyde + NH4(+) + 2 H(+). Its pathway is one-carbon metabolism; methylamine degradation; formaldehyde from methylamine: step 1/1. Methylamine dehydrogenase carries out the oxidation of methylamine. Electrons are passed from methylamine dehydrogenase to amicyanin. The chain is Methylamine dehydrogenase light chain (mauA) from Paracoccus denitrificans.